Consider the following 252-residue polypeptide: Protein IL-40 (252 aa).

Residues 1–18 form the signal peptide; it reads MALLQLLLFAMLAACGFS. Residues Asn-82 and Asn-177 are each glycosylated (N-linked (GlcNAc...) asparagine).

In terms of tissue distribution, expressed in bone marrow, spleen and lymph node.

The protein localises to the secreted. Functionally, probable B cell-associated cytokine that plays a role in the regulation of humoral immune responses. Involved in lymphocyte B cell development and immunoglobulin/IgA production. The chain is Protein IL-40 from Mus musculus (Mouse).